Consider the following 102-residue polypeptide: Trp operon repressor homolog (102 aa).

The DNA-binding element occupies 59–82 (QRQISQMLGVGIATITRGSNELKL).

This sequence belongs to the TrpR family. As to quaternary structure, homodimer.

It localises to the cytoplasm. This protein is an aporepressor. When complexed with L-tryptophan it binds the operator region of the trp operon and prevents the initiation of transcription. This chain is Trp operon repressor homolog, found in Vibrio vulnificus (strain CMCP6).